The following is a 346-amino-acid chain: Biotin synthase (346 aa).

In terms of domain architecture, Radical SAM core spans 38–256 (RQVQVSTLLS…IAVARIMMPT (219 aa)). C53, C57, and C60 together coordinate [4Fe-4S] cluster. [2Fe-2S] cluster is bound by residues C97, C128, C188, and R260.

The protein belongs to the radical SAM superfamily. Biotin synthase family. Homodimer. [4Fe-4S] cluster is required as a cofactor. [2Fe-2S] cluster serves as cofactor.

It carries out the reaction (4R,5S)-dethiobiotin + (sulfur carrier)-SH + 2 reduced [2Fe-2S]-[ferredoxin] + 2 S-adenosyl-L-methionine = (sulfur carrier)-H + biotin + 2 5'-deoxyadenosine + 2 L-methionine + 2 oxidized [2Fe-2S]-[ferredoxin]. Its pathway is cofactor biosynthesis; biotin biosynthesis; biotin from 7,8-diaminononanoate: step 2/2. Catalyzes the conversion of dethiobiotin (DTB) to biotin by the insertion of a sulfur atom into dethiobiotin via a radical-based mechanism. The polypeptide is Biotin synthase (Escherichia coli O157:H7).